We begin with the raw amino-acid sequence, 860 residues long: Leucine--tRNA ligase (860 aa).

The 'HIGH' region motif lies at 42 to 52 (PYPSGRLHMGH). Positions 619–623 (KMSKS) match the 'KMSKS' region motif. K622 provides a ligand contact to ATP.

The protein belongs to the class-I aminoacyl-tRNA synthetase family.

The protein localises to the cytoplasm. The catalysed reaction is tRNA(Leu) + L-leucine + ATP = L-leucyl-tRNA(Leu) + AMP + diphosphate. In Shigella dysenteriae serotype 1 (strain Sd197), this protein is Leucine--tRNA ligase.